A 400-amino-acid chain; its full sequence is Exodeoxyribonuclease 7 large subunit (400 aa).

This sequence belongs to the XseA family. In terms of assembly, heterooligomer composed of large and small subunits.

The protein localises to the cytoplasm. It carries out the reaction Exonucleolytic cleavage in either 5'- to 3'- or 3'- to 5'-direction to yield nucleoside 5'-phosphates.. Its function is as follows. Bidirectionally degrades single-stranded DNA into large acid-insoluble oligonucleotides, which are then degraded further into small acid-soluble oligonucleotides. In Clostridium kluyveri (strain NBRC 12016), this protein is Exodeoxyribonuclease 7 large subunit.